We begin with the raw amino-acid sequence, 347 residues long: NADH-ubiquinone oxidoreductase chain 2 (347 aa).

The next 11 helical transmembrane spans lie at 3-23, 25-45, 67-87, 96-116, 122-142, 145-165, 178-198, 200-220, 237-257, 274-294, and 325-345; these read PIIL…VMIS, HWLL…PIMM, SMLL…WTVM, MLMT…FWVP, IPLS…MSVL, ILPS…ITIG, IMAY…LYNP, MTLL…TLFM, APIM…LPPL, DSII…YFYM, and LLPT…ILSI.

It belongs to the complex I subunit 2 family. In terms of assembly, core subunit of respiratory chain NADH dehydrogenase (Complex I) which is composed of 45 different subunits. Interacts with TMEM242.

The protein localises to the mitochondrion inner membrane. The enzyme catalyses a ubiquinone + NADH + 5 H(+)(in) = a ubiquinol + NAD(+) + 4 H(+)(out). Core subunit of the mitochondrial membrane respiratory chain NADH dehydrogenase (Complex I) which catalyzes electron transfer from NADH through the respiratory chain, using ubiquinone as an electron acceptor. Essential for the catalytic activity and assembly of complex I. The sequence is that of NADH-ubiquinone oxidoreductase chain 2 from Ovis aries (Sheep).